The chain runs to 322 residues: uncharacterized protein (322 aa).

Residues 269 to 289 (QDEEEEPRDERRPRRRLGKAQ) form a disordered region.

This is an uncharacterized protein from Sinorhizobium fredii (strain NBRC 101917 / NGR234).